The primary structure comprises 302 residues: Myeloid-associated differentiation marker-like protein 2 (302 aa).

MARVEL domains lie at alanine 13–glycine 149 and tyrosine 154–isoleucine 298. 7 consecutive transmembrane segments (helical) span residues alanine 45–valine 65, alanine 87–phenylalanine 107, leucine 124–threonine 144, alanine 158–alanine 178, tryptophan 191–isoleucine 211, phenylalanine 225–proline 245, and leucine 273–threonine 293.

This sequence belongs to the MAL family.

The protein resides in the membrane. The protein is Myeloid-associated differentiation marker-like protein 2 (myadml2) of Xenopus laevis (African clawed frog).